Here is a 1497-residue protein sequence, read N- to C-terminus: Dual oxidase 1 (1497 aa).

A signal peptide spans 1–21; that stretch reads MRSKHVLYIAILFSSIFGGKG. At 22-587 the chain is on the extracellular side; that stretch reads IQQNEEFQRY…MQSTYWTDND (566 aa). Positions 26–590 are peroxidase-like; mediates peroxidase activity; the sequence is EEFQRYDGWY…TYWTDNDTTY (565 aa). N-linked (GlcNAc...) asparagine glycosylation is found at asparagine 66, asparagine 305, asparagine 567, and asparagine 586. A helical transmembrane segment spans residues 588 to 608; it reads TTYVFTLIGLACVPLICYGIG. Residues 609-986 are Cytoplasmic-facing; sequence RYLVNRRIAI…VSAFLETYRQ (378 aa). EF-hand domains follow at residues 817 to 852 and 853 to 888; these read ANNEFVKRMFAMTAKHNEDSLSFNEFLTVLREFVNA and PQKQKLQTLFKMCDLEGKNKVLRKDLAELVKSLNQT. The chain crosses the membrane as a helical span at residues 987 to 1007; it reads HVFIVFCFVAINLVLFFERFW. Topologically, residues 1008–1024 are extracellular; the sequence is HYRYMAENRDLRRVMGA. The chain crosses the membrane as a helical span at residues 1025-1045; sequence GIAITRGAAGALSFCMALILL. One can recognise a Ferric oxidoreductase domain in the interval 1030–1210; that stretch reads RGAAGALSFC…FVIDRIIGLM (181 aa). The Cytoplasmic segment spans residues 1046 to 1068; that stretch reads TVCRNIITLLRETVIAQYIPFDS. The helical transmembrane segment at 1069–1089 threads the bilayer; sequence AIAFHKIVALFAAFWATLHTV. Residues 1090–1134 lie on the Extracellular side of the membrane; the sequence is GHCVNFYHVGTQSQEGLACLFQEAFFGSNFLPSISYWFFSTITGL. Residues 1135-1155 traverse the membrane as a helical segment; it reads TGIALVAVMCIIYVFALPCFI. Residues 1156-1163 are Cytoplasmic-facing; sequence KRAYHAFR. A helical transmembrane segment spans residues 1164 to 1184; that stretch reads LTHLLNIAFYALTLLHGLPKL. Topologically, residues 1185–1189 are extracellular; that stretch reads LDSPK. The chain crosses the membrane as a helical span at residues 1190 to 1210; it reads FGYYVVGPIVLFVIDRIIGLM. The region spanning 1211 to 1318 is the FAD-binding FR-type domain; that stretch reads QYYKKLEIVN…KGPYGDGNQE (108 aa). Residues 1211 to 1497 are Cytoplasmic-facing; the sequence is QYYKKLEIVN…PSFAHRFETF (287 aa).

The protein in the N-terminal section; belongs to the peroxidase family. Interacts with doxa-1 and tsp-15. Interacts with rho-1. As to expression, expressed in hypodermal cells.

It is found in the membrane. The enzyme catalyses NADH + O2 + H(+) = H2O2 + NAD(+). The catalysed reaction is NADPH + O2 + H(+) = H2O2 + NADP(+). Its activity is regulated as follows. Peroxidase activity is inhibited by aminobenzohydrazide. Functionally, plays a role in cuticle biogenesis. In complex with doxa-1 and tsp-15, produces reactive oxygen species (ROS), which are probably used by mlt-7 for tyrosine cross-linking, thus stabilizing cuticular extracellular matrix. May regulate the production of ROS by playing a role in modulating proline catabolism. Required in combination with mlt-7 for correct formation of cross-links in cuticle collagens. Association with the GTPase rho-1 promotes ROS production and this interaction may be modulated by memo-1, in order to control the oxidative stress response and longevity. This is Dual oxidase 1 from Caenorhabditis elegans.